Reading from the N-terminus, the 380-residue chain is 8-amino-7-oxononanoate synthase (380 aa).

Position 26 (R26) interacts with substrate. Residue 104-105 (GY) coordinates pyridoxal 5'-phosphate. H129 is a substrate binding site. Residues S175, 200-203 (DEAH), and 232-235 (TLSK) each bind pyridoxal 5'-phosphate. K235 carries the post-translational modification N6-(pyridoxal phosphate)lysine. Substrate is bound at residue T345.

This sequence belongs to the class-II pyridoxal-phosphate-dependent aminotransferase family. BioF subfamily. In terms of assembly, homodimer. Pyridoxal 5'-phosphate serves as cofactor.

The enzyme catalyses 6-carboxyhexanoyl-[ACP] + L-alanine + H(+) = (8S)-8-amino-7-oxononanoate + holo-[ACP] + CO2. It participates in cofactor biosynthesis; biotin biosynthesis. Functionally, catalyzes the decarboxylative condensation of pimeloyl-[acyl-carrier protein] and L-alanine to produce 8-amino-7-oxononanoate (AON), [acyl-carrier protein], and carbon dioxide. The chain is 8-amino-7-oxononanoate synthase from Mycolicibacterium gilvum (strain PYR-GCK) (Mycobacterium gilvum (strain PYR-GCK)).